A 139-amino-acid polypeptide reads, in one-letter code: Transcription antitermination protein NusB (139 aa).

The protein belongs to the NusB family.

Its function is as follows. Involved in transcription antitermination. Required for transcription of ribosomal RNA (rRNA) genes. Binds specifically to the boxA antiterminator sequence of the ribosomal RNA (rrn) operons. In Nitratiruptor sp. (strain SB155-2), this protein is Transcription antitermination protein NusB.